The following is a 136-amino-acid chain: Large ribosomal subunit protein uL16 (136 aa).

This sequence belongs to the universal ribosomal protein uL16 family. As to quaternary structure, part of the 50S ribosomal subunit.

In terms of biological role, binds 23S rRNA and is also seen to make contacts with the A and possibly P site tRNAs. The sequence is that of Large ribosomal subunit protein uL16 from Shewanella loihica (strain ATCC BAA-1088 / PV-4).